The primary structure comprises 333 residues: Ferrochelatase (333 aa).

Fe cation contacts are provided by H202 and E284.

The protein belongs to the ferrochelatase family.

The protein resides in the cytoplasm. It catalyses the reaction heme b + 2 H(+) = protoporphyrin IX + Fe(2+). It participates in porphyrin-containing compound metabolism; protoheme biosynthesis; protoheme from protoporphyrin-IX: step 1/1. Its function is as follows. Catalyzes the ferrous insertion into protoporphyrin IX. The sequence is that of Ferrochelatase from Francisella tularensis subsp. mediasiatica (strain FSC147).